We begin with the raw amino-acid sequence, 407 residues long: MANEYKKILLLKGLELMDEYHFIIIKSLLAYDLGLTTKMQEEYNRIKISDLMEKKFQGVACVDKLIELAKDMPPLKNLVNNLRKERSKVARKMKAQGVVLMKKINQEEVGLVAPAPTARNTLTSEVGERIPVAQKRKTLSKGKTEAKRIKVPQEQSEPPHPSGASTSAATDHPPLPHTSSSTPSNTSFAQNQQTQAQCQVDTRRNVPQKDPVTVMVLKATAPFKYESPEHGKSTMFHATVASKTQYFHVKVFDISLKEKFIRKKVITISDYSECKGVMEIKEASSVSDFDQNFEVPNRIIEIANKTPKISQLYKQASGTMVYGLFMVQKKSIHKKNTIYEIKDNTGSMDVVGNGKWHNIKCEKGDKLRLFCFQLRTVNRKLKLVCGSHSFIKVIKAKKNKEGSMNVN.

In terms of domain architecture, Pyrin spans 1 to 88 (MANEYKKILL…VNNLRKERSK (88 aa)). Residues 122–211 (LTSEVGERIP…TRRNVPQKDP (90 aa)) form a disordered region. The Nuclear localization signal motif lies at 131 to 137 (PVAQKRK). The span at 177-199 (HTSSSTPSNTSFAQNQQTQAQCQ) shows a compositional bias: low complexity. One can recognise an HIN-200 domain in the interval 196–394 (AQCQVDTRRN…CGSHSFIKVI (199 aa)).

In terms of assembly, participates in a ternary complex with YY1 and the YY1 target DNA element. Binds nucleolin and nucleophosmin/NPM/B23.

The protein localises to the nucleus. Its subcellular location is the cytoplasm. In terms of biological role, may act as a transcriptional activator/repressor in the myeloid lineage. Plays a role in the granulocyte/monocyte cell-specific response to interferon. Stimulates the DNA binding of the transcriptional repressor protein YY1. The protein is Myeloid cell nuclear differentiation antigen (MNDA) of Macaca fascicularis (Crab-eating macaque).